The primary structure comprises 454 residues: L-cysteine desulfhydrase-like protein lolT1 (454 aa).

Position 227 is an N6-(pyridoxal phosphate)lysine (lysine 227).

It belongs to the class-V pyridoxal-phosphate-dependent aminotransferase family. Pyridoxal 5'-phosphate serves as cofactor.

The protein operates within alkaloid biosynthesis. Functionally, L-cysteine desulfhydrase-like protein; part of the gene cluster that mediates the biosynthesis of loline alkaloids, potent insecticidal agents composed of a pyrrolizidine ring system and an uncommon ether bridge linking carbons 2 and 7. Lolines are structurally differentiated by the various modifications of the L-amino group and include norloline, loline, N-methylloline, N-acetylloline, N-acetylnorloline, and N-formylloline. The first committed step is the condensation of O-acetyl-L-homoserine (derived from L-aspartic acid) and L-proline, probably catalyzed by the gamma-type pyridoxal 5'-phosphate(PLP)-dependent enzyme lolC, to give the diamino diacid, NACPP. Ensuing cyclization, decarboxylation, and acetylation steps yield 1-exo-acetamidopyrrolizidine (AcAP). LolO is required for installation of the ether bridge upon the pathway intermediate, 1-exo-acetamidopyrrolizidine (AcAP). In sequential 2-oxoglutarate- and O(2)-consuming steps, lolO removes hydrogens from C2 and C7 of AcAP to form both carbon-oxygen bonds in N-acetylnorloline (NANL), the precursor to all other lolines. The enzymes lolD, lolE, lolF and lolT have also been proposed to be involved in the ether-bridge installation. Further processing of the exocyclic moiety of NANL by fungal N-acetamidase (LolN), methyltransferase (LolM), and cytochrome P450 (LolP) enzymes, with occasional involvement of a plant acetyltransferase, generates the other known lolines. LolN transforms NANL to norlonine which is monomethylated and dimethylated to respectively lonine and N-methyllonine (NML) by lolM. LolP catalyzes hydroxylation of the methyl group in N-methylloline (NML) and further oxygenation to N-formylloline (NFL). A plant acetyltransferase is responsible for the acetylation of loline to form N-acetylloline (NAL). LolA might interact with aspartate kinase to prevent feedback inhibition of its activity by these end products and thereby promote production of L-homoserine from L-aspartate. The protein is L-cysteine desulfhydrase-like protein lolT1 of Epichloe uncinata (Endophyte fungus).